We begin with the raw amino-acid sequence, 101 residues long: Phosphoribosyl-AMP cyclohydrolase (101 aa).

Asp71 is a Mg(2+) binding site. Cys72 provides a ligand contact to Zn(2+). Mg(2+) contacts are provided by Asp73 and Asp75. Residues Cys88 and Cys95 each coordinate Zn(2+).

Belongs to the PRA-CH family. In terms of assembly, homodimer. Requires Mg(2+) as cofactor. It depends on Zn(2+) as a cofactor.

It is found in the cytoplasm. The catalysed reaction is 1-(5-phospho-beta-D-ribosyl)-5'-AMP + H2O = 1-(5-phospho-beta-D-ribosyl)-5-[(5-phospho-beta-D-ribosylamino)methylideneamino]imidazole-4-carboxamide. Its pathway is amino-acid biosynthesis; L-histidine biosynthesis; L-histidine from 5-phospho-alpha-D-ribose 1-diphosphate: step 3/9. Its function is as follows. Catalyzes the hydrolysis of the adenine ring of phosphoribosyl-AMP. In Bacillus cereus (strain 03BB102), this protein is Phosphoribosyl-AMP cyclohydrolase.